Reading from the N-terminus, the 149-residue chain is Calmodulin (149 aa).

An N-acetylalanine modification is found at Ala2. 4 EF-hand domains span residues 8 to 43 (EQIAEFKEAFSLFDKDGDGCITTKELGTVMRSLGQN), 44 to 79 (PTEAELQDMISEVDADQNGTIDFPEFLNLMARKMKD), 81 to 116 (DSEEELKEAFKVFDKDQNGFISAAELRHVMTNLGEK), and 117 to 149 (LTDEEVDEMIREADIDGDGQVNYEEFVRMMLAK). Residues Asp21, Asp23, Asp25, Cys27, Glu32, Asp57, Asp59, Asn61, Thr63, Glu68, Asp94, Asp96, Asn98, and Glu105 each contribute to the Ca(2+) site. Lys116 is modified (N6,N6,N6-trimethyllysine). Ca(2+) contacts are provided by Asp130, Asp132, Asp134, Gln136, and Glu141.

Belongs to the calmodulin family.

In terms of biological role, calmodulin mediates the control of a large number of enzymes, ion channels and other proteins by Ca(2+). Among the enzymes to be stimulated by the calmodulin-Ca(2+) complex are a number of protein kinases and phosphatases. The polypeptide is Calmodulin (CALM1) (Solanum lycopersicum (Tomato)).